The chain runs to 114 residues: uncharacterized protein (114 aa).

The next 3 helical transmembrane spans lie at L21–F41, G65–I85, and L93–D113.

Its subcellular location is the membrane. This is an uncharacterized protein from Saccharomyces cerevisiae (strain ATCC 204508 / S288c) (Baker's yeast).